We begin with the raw amino-acid sequence, 116 residues long: Putative pterin-4-alpha-carbinolamine dehydratase (116 aa).

This sequence belongs to the pterin-4-alpha-carbinolamine dehydratase family.

The catalysed reaction is (4aS,6R)-4a-hydroxy-L-erythro-5,6,7,8-tetrahydrobiopterin = (6R)-L-erythro-6,7-dihydrobiopterin + H2O. This is Putative pterin-4-alpha-carbinolamine dehydratase from Stenotrophomonas maltophilia (strain R551-3).